The following is a 150-amino-acid chain: UPF0178 protein Sbal_1771 (150 aa).

This sequence belongs to the UPF0178 family.

The sequence is that of UPF0178 protein Sbal_1771 from Shewanella baltica (strain OS155 / ATCC BAA-1091).